The primary structure comprises 524 residues: Probable inorganic phosphate transporter 1-2 (524 aa).

The Cytoplasmic segment spans residues 1-24 (MAEQQLGVLKALDVAKTQLYHFTA). The chain crosses the membrane as a helical span at residues 25–45 (IVIAGMGFFTDAYDLFCVSLV). The Extracellular portion of the chain corresponds to 46 to 70 (TKLLGRIYYFNPESAKPGSLPPHVA). Residues 71–91 (AAVNGVALCGTLSGQLFFGWL) form a helical membrane-spanning segment. The Cytoplasmic segment spans residues 92–99 (GDKLGRKK). Residues 100–120 (VYGLTLIMMILCSVASGLSFG) form a helical membrane-spanning segment. Over 121-131 (NEAKGVMTTLC) the chain is Extracellular. Residues 132 to 152 (FFRFWLGFGIGGDYPLSATIM) form a helical membrane-spanning segment. At 153–161 (SEYANKKTR) the chain is on the cytoplasmic side. The helical transmembrane segment at 162-182 (GAFIAAVFAMQGVGILAGGFV) threads the bilayer. Residues 183 to 211 (ALAVSSIFDKKFPAPTYAVNRALSTPPQV) are Extracellular-facing. The helical transmembrane segment at 212–232 (DYIWRIIVMFGALPAALTYYW) threads the bilayer. Over 233 to 292 (RMKMPETARYTALVAKNIKQATADMSKVLQTDIELEERVEDDVKDPRQNYGLFSKEFLRR) the chain is Cytoplasmic. Residues 293 to 313 (HGLHLLGTTSTWFLLDIAFYS) traverse the membrane as a helical segment. Over 314 to 348 (QNLFQKDIFSAIGWIPKAATMNATHEVFRIARAQT) the chain is Extracellular. A helical transmembrane segment spans residues 349–369 (LIALCSTVPGYWFTVAFIDTI). At 370–371 (GR) the chain is on the cytoplasmic side. The chain crosses the membrane as a helical span at residues 372–392 (FKIQLNGFFMMTVFMFAIAFP). At 393–402 (YNHWIKPENR) the chain is on the extracellular side. A helical transmembrane segment spans residues 403–423 (IGFVVMYSLTFFFANFGPNAT). The Cytoplasmic portion of the chain corresponds to 424–441 (TFIVPAEIFPARLRSTCH). A helical membrane pass occupies residues 442 to 462 (GISAAAGKAGAIIGAFGFLYA). Residues 463-484 (AQNQDKAKVDAGYPPGIGVKNS) lie on the Extracellular side of the membrane. A helical transmembrane segment spans residues 485-505 (LIVLGVLNFIGMLFTFLVPEP). Over 506–524 (KGKSLEELSGEAEVSHDEK) the chain is Cytoplasmic.

This sequence belongs to the major facilitator superfamily. Phosphate:H(+) symporter (TC 2.A.1.9) family. As to expression, root specific, especially in trichoblasts. In mature plants, localized in root cortical cells and young lateral roots.

It is found in the membrane. High-affinity transporter for external inorganic phosphate. This is Probable inorganic phosphate transporter 1-2 (PHT1-2) from Arabidopsis thaliana (Mouse-ear cress).